Consider the following 457-residue polypeptide: UDP-glycosyltransferase 72C1 (457 aa).

Residues S272, 343–344 (WA), 361–369 (HCGWNSVLE), and 383–386 (YSEQ) each bind UDP-alpha-D-glucose.

The protein belongs to the UDP-glycosyltransferase family.

The polypeptide is UDP-glycosyltransferase 72C1 (UGT72C1) (Arabidopsis thaliana (Mouse-ear cress)).